The sequence spans 401 residues: Argininosuccinate synthase (401 aa).

8–16 (AYSGGLDTS) provides a ligand contact to ATP. L-citrulline is bound at residue Y87. G117 serves as a coordination point for ATP. L-aspartate-binding residues include T119, N123, and D124. N123 contacts L-citrulline. L-citrulline contacts are provided by R127, S175, E259, and Y271.

The protein belongs to the argininosuccinate synthase family. Type 1 subfamily. In terms of assembly, homotetramer.

It localises to the cytoplasm. It catalyses the reaction L-citrulline + L-aspartate + ATP = 2-(N(omega)-L-arginino)succinate + AMP + diphosphate + H(+). It participates in amino-acid biosynthesis; L-arginine biosynthesis; L-arginine from L-ornithine and carbamoyl phosphate: step 2/3. The protein is Argininosuccinate synthase of Corynebacterium efficiens (strain DSM 44549 / YS-314 / AJ 12310 / JCM 11189 / NBRC 100395).